The chain runs to 593 residues: Arginine--tRNA ligase (593 aa).

Positions 138-148 (ANPTGPLHVGH) match the 'HIGH' region motif.

The protein belongs to the class-I aminoacyl-tRNA synthetase family. As to quaternary structure, monomer.

The protein localises to the cytoplasm. It catalyses the reaction tRNA(Arg) + L-arginine + ATP = L-arginyl-tRNA(Arg) + AMP + diphosphate. The sequence is that of Arginine--tRNA ligase from Burkholderia orbicola (strain MC0-3).